The sequence spans 293 residues: Small ribosomal subunit protein uS5 (293 aa).

Positions 1-56 (MADDAGAAGGPGGPGGPGMGNRGGFRGGFGSGIRGRGRGRGRGRGRGRGARGGKAE) are disordered. A2 carries the N-acetylalanine modification. Residues 7–34 (AAGGPGGPGGPGMGNRGGFRGGFGSGIR) are compositionally biased toward gly residues. Positions 35 to 51 (GRGRGRGRGRGRGRGAR) are enriched in basic residues. Glycyl lysine isopeptide (Lys-Gly) (interchain with G-Cter in ubiquitin) cross-links involve residues K54 and K58. The 64-residue stretch at 102-165 (LKDEVLKIMP…ILAKLSIVPV (64 aa)) folds into the S5 DRBM domain. Residue T252 is modified to Phosphothreonine. An N6-acetyllysine modification is found at K263. The residue at position 264 (S264) is a Phosphoserine. The residue at position 270 (T270) is a Phosphothreonine. An N6-acetyllysine; alternate modification is found at K275. Residue K275 forms a Glycyl lysine isopeptide (Lys-Gly) (interchain with G-Cter in SUMO1); alternate linkage. K275 participates in a covalent cross-link: Glycyl lysine isopeptide (Lys-Gly) (interchain with G-Cter in SUMO2); alternate. K275 participates in a covalent cross-link: Glycyl lysine isopeptide (Lys-Gly) (interchain with G-Cter in ubiquitin); alternate. S281 is modified (phosphoserine).

The protein belongs to the universal ribosomal protein uS5 family. As to quaternary structure, component of the small ribosomal subunit. Interacts with zinc finger protein ZNF277 (via zinc-finger domains); the interaction is direct; the interaction is extra-ribosomal. Interaction with ZNF277 competes with the binding of RPS2 to protein arginine methyltransferase PRMT3. Citrullinated by PADI4 in the Arg/Gly-rich region. In terms of processing, asymmetric arginine dimethylation by PRMT3 occurs at multiple sites in the Arg/Gly-rich region. Post-translationally, monoubiquitinated at Lys-54 and Lys-58 by RNF10 when a ribosome has stalled during translation, leading to its degradation by the proteasome. Deubiquitinated at Lys-54 and Lys-58 by USP10, preventing degradation by the proteasome and promoting 40S ribosome subunit recycling following ribosome dissociation.

It is found in the cytoplasm. It localises to the nucleus. The protein localises to the nucleolus. In terms of biological role, component of the ribosome, a large ribonucleoprotein complex responsible for the synthesis of proteins in the cell. The small ribosomal subunit (SSU) binds messenger RNAs (mRNAs) and translates the encoded message by selecting cognate aminoacyl-transfer RNA (tRNA) molecules. The large subunit (LSU) contains the ribosomal catalytic site termed the peptidyl transferase center (PTC), which catalyzes the formation of peptide bonds, thereby polymerizing the amino acids delivered by tRNAs into a polypeptide chain. The nascent polypeptides leave the ribosome through a tunnel in the LSU and interact with protein factors that function in enzymatic processing, targeting, and the membrane insertion of nascent chains at the exit of the ribosomal tunnel. Plays a role in the assembly and function of the 40S ribosomal subunit. Mutations in this protein affects the control of translational fidelity. Involved in nucleolar processing of pre-18S ribosomal RNA and ribosome assembly. The chain is Small ribosomal subunit protein uS5 (RPS2) from Homo sapiens (Human).